A 951-amino-acid chain; its full sequence is Autophagy-related protein 9 (951 aa).

The interval 1 to 165 (MMTSNILSRF…APGPSSRADR (165 aa)) is disordered. The Cytoplasmic portion of the chain corresponds to 1–239 (MMTSNILSRF…NGIWSILLNR (239 aa)). Polar residues predominate over residues 16-33 (SPSVYETLRQQDAESNPS). Residues 35-54 (VEERAGLEFEDDRRTQFSDR) are compositionally biased toward basic and acidic residues. The segment covering 79–94 (FLTQRSPQRTSGTATA) has biased composition (polar residues). A compositionally biased stretch (basic residues) spans 97–108 (GGRRRKHSRPRW). Residues 240-260 (GLSLLTFAFVVGFSTFLTNCI) form a helical membrane-spanning segment. Residues 261–288 (DYRNFRGSRKMDDILIQQCTKKMSMSST) lie on the Lumenal side of the membrane. A helical transmembrane segment spans residues 289-309 (FLLWLLTVFWIGKAFQYLMDI). Residues 310-455 (RRLKHMHDFY…KALSEGLRRR (146 aa)) lie on the Cytoplasmic side of the membrane. An intramembrane segment occupies 456-476 (FIFAGIMNIFVAPFIVVYFLM). Residues 477–542 (HYFFRYFNEY…QFPKDKTVQV (66 aa)) are Cytoplasmic-facing. Residues 543-563 (AGFVAFVSGALASVLALVSII) form a helical membrane-spanning segment. The Lumenal portion of the chain corresponds to 564-577 (DPELFLGFEITHDR). A helical membrane pass occupies residues 578–598 (TVLFYLGVFGSVWAFARGLVP). At 599–644 (EETNVFDPEFALLEVIDFTHYFPNHWKGRLHSDEVRKEFAVLYQMK) the chain is on the cytoplasmic side. The stretch at 645 to 665 (IVIFLEEILSMIFTPFILWFS) is an intramembrane region. The Cytoplasmic segment spans residues 666-951 (LPKCSDRLID…DNRGRTTVGI (286 aa)). The tract at residues 848 to 897 (SRPVRPITDPIEDDNESPSAEIRRGAVKKSPHTTTGSSGGAIGTSDSNLG) is disordered.

Belongs to the ATG9 family. In terms of assembly, homotrimer; forms a homotrimer with a central pore that forms a path between the two membrane leaflets. In terms of processing, phosphorylated by atg1. Atg1 phosphorylation is required for preautophagosome elongation.

The protein localises to the preautophagosomal structure membrane. The protein resides in the cytoplasmic vesicle membrane. It is found in the golgi apparatus membrane. It localises to the endoplasmic reticulum membrane. The enzyme catalyses a 1,2-diacyl-sn-glycero-3-phosphocholine(in) = a 1,2-diacyl-sn-glycero-3-phosphocholine(out). It catalyses the reaction a 1,2-diacyl-sn-glycero-3-phospho-L-serine(in) = a 1,2-diacyl-sn-glycero-3-phospho-L-serine(out). It carries out the reaction a 1,2-diacyl-sn-glycero-3-phosphoethanolamine(in) = a 1,2-diacyl-sn-glycero-3-phosphoethanolamine(out). The catalysed reaction is a 1,2-diacyl-sn-glycero-3-phospho-(1D-myo-inositol-3-phosphate)(in) = a 1,2-diacyl-sn-glycero-3-phospho-(1D-myo-inositol-3-phosphate)(out). In terms of biological role, phospholipid scramblase involved in autophagy and cytoplasm to vacuole transport (Cvt) vesicle formation. Cycles between the preautophagosomal structure/phagophore assembly site (PAS) and the cytoplasmic vesicle pool and supplies membrane for the growing autophagosome. Lipid scramblase activity plays a key role in preautophagosomal structure/phagophore assembly by distributing the phospholipids that arrive through atg2 from the cytoplasmic to the luminal leaflet of the bilayer, thereby driving autophagosomal membrane expansion. Required for mitophagy. Also involved in endoplasmic reticulum-specific autophagic process and is essential for the survival of cells subjected to severe ER stress. Different machineries are required for anterograde trafficking to the PAS during either the Cvt pathway or bulk autophagy and for retrograde trafficking. This chain is Autophagy-related protein 9 (atg9), found in Aspergillus oryzae (strain ATCC 42149 / RIB 40) (Yellow koji mold).